The chain runs to 67 residues: Protein AaeX (67 aa).

A run of 2 helical transmembrane segments spans residues 3–23 and 43–63; these read VLPVVVVFGMSFPPIFIEIIV and LVWHPALFNTALYCCLFYVVS.

Belongs to the AaeX family.

The protein localises to the cell membrane. The chain is Protein AaeX from Erwinia tasmaniensis (strain DSM 17950 / CFBP 7177 / CIP 109463 / NCPPB 4357 / Et1/99).